The sequence spans 60 residues: Large ribosomal subunit protein bL32 (60 aa).

It belongs to the bacterial ribosomal protein bL32 family.

The protein is Large ribosomal subunit protein bL32 of Ruminiclostridium cellulolyticum (strain ATCC 35319 / DSM 5812 / JCM 6584 / H10) (Clostridium cellulolyticum).